Reading from the N-terminus, the 663-residue chain is Terreic acid cluster-specific transcription factor atF (663 aa).

Polar residues predominate over residues 1–20; the sequence is MFATFNSSMDNRSSANSPVA. 2 disordered regions span residues 1–28 and 55–126; these read MFAT…PKRT and TRGV…SPSQ. Positions 34 to 60 form a DNA-binding region, zn(2)-C6 fungal-type; sequence CDWCRLNRVKCDDGQPCKNCRTRGVRC. A compositionally biased stretch (basic residues) spans 55–64; that stretch reads TRGVRCRKGS. Composition is skewed to low complexity over residues 73-88 and 105-125; these read SSSA…QGAQ and ATTS…PSPS.

The protein resides in the nucleus. Functionally, transcription factor that regulates the expression of the gene cluster that mediates the biosynthesis of terreic acid, a quinone epoxide inhibitor of Bruton's tyrosine kinase. In Aspergillus terreus (strain NIH 2624 / FGSC A1156), this protein is Terreic acid cluster-specific transcription factor atF.